A 304-amino-acid chain; its full sequence is Sulfate adenylyltransferase subunit 2 (304 aa).

Belongs to the PAPS reductase family. CysD subfamily. As to quaternary structure, heterodimer composed of CysD, the smaller subunit, and CysN.

It carries out the reaction sulfate + ATP + H(+) = adenosine 5'-phosphosulfate + diphosphate. It participates in sulfur metabolism; hydrogen sulfide biosynthesis; sulfite from sulfate: step 1/3. Functionally, with CysN forms the ATP sulfurylase (ATPS) that catalyzes the adenylation of sulfate producing adenosine 5'-phosphosulfate (APS) and diphosphate, the first enzymatic step in sulfur assimilation pathway. APS synthesis involves the formation of a high-energy phosphoric-sulfuric acid anhydride bond driven by GTP hydrolysis by CysN coupled to ATP hydrolysis by CysD. This Acinetobacter baumannii (strain SDF) protein is Sulfate adenylyltransferase subunit 2.